Here is a 240-residue protein sequence, read N- to C-terminus: tRNA (guanine-N(7)-)-methyltransferase (240 aa).

The segment at 1–20 is disordered; that stretch reads MTESHDTPITSDGEARPHRR. S-adenosyl-L-methionine contacts are provided by glutamate 70, glutamate 95, aspartate 122, and aspartate 145. Residue aspartate 145 is part of the active site. Residues lysine 149, aspartate 181, and 218-221 contribute to the substrate site; that span reads TKFE.

Belongs to the class I-like SAM-binding methyltransferase superfamily. TrmB family.

It catalyses the reaction guanosine(46) in tRNA + S-adenosyl-L-methionine = N(7)-methylguanosine(46) in tRNA + S-adenosyl-L-homocysteine. It functions in the pathway tRNA modification; N(7)-methylguanine-tRNA biosynthesis. Functionally, catalyzes the formation of N(7)-methylguanine at position 46 (m7G46) in tRNA. This is tRNA (guanine-N(7)-)-methyltransferase from Pseudomonas putida (strain ATCC 700007 / DSM 6899 / JCM 31910 / BCRC 17059 / LMG 24140 / F1).